A 314-amino-acid chain; its full sequence is Regulator of microtubule dynamics protein 1 (314 aa).

Lys165 is modified (N6-succinyllysine). 2 TPR repeats span residues 168–204 (AICL…NPKD) and 222–258 (PWYQ…DPNF).

This sequence belongs to the RMDN family. In terms of assembly, interacts with microtubules.

The protein resides in the cytoplasm. It is found in the cytoskeleton. The protein localises to the spindle. Its subcellular location is the spindle pole. The polypeptide is Regulator of microtubule dynamics protein 1 (RMDN1) (Pongo abelii (Sumatran orangutan)).